The sequence spans 109 residues: uncharacterized protein (109 aa).

This is an uncharacterized protein from Bacillus subtilis (strain 168).